The chain runs to 277 residues: Undecaprenyl-diphosphatase (277 aa).

The next 6 membrane-spanning stretches (helical) occupy residues 44–64 (RAMA…VWEF), 86–106 (GNLL…ADLI), 110–130 (LFNP…MLWA), 184–204 (AATE…AVYS), 215–235 (GDLP…MIAV), and 250–270 (FAWY…FGWV).

Belongs to the UppP family.

The protein localises to the cell inner membrane. The enzyme catalyses di-trans,octa-cis-undecaprenyl diphosphate + H2O = di-trans,octa-cis-undecaprenyl phosphate + phosphate + H(+). Its function is as follows. Catalyzes the dephosphorylation of undecaprenyl diphosphate (UPP). Confers resistance to bacitracin. In Pseudomonas putida (strain ATCC 47054 / DSM 6125 / CFBP 8728 / NCIMB 11950 / KT2440), this protein is Undecaprenyl-diphosphatase.